The chain runs to 311 residues: MNMKTIEWKDGELVLIDQRKLPDSLEYFRCRDYRDVIYAIKNMVVRGAPAIGVTAAFGVAMAELAGEDVEVAAEEIKASRPTAVNLFWAVDRVMKSESPLDEAITMYMEDMETNRAIGRHGAGLIEDGDTVLTHCNAGALACVDYGTALGVIRAAWDDGKRLTVICDETRPVGQGARLSVWEMQQEGIPVKLITDVAAGYLMQTGMIDKVIIGADRIAEGGVANKIGSLMVALAAKRFNVPFYVAAPMSTFDTENSIYDIEIEERDPAEVLYYGGCRIAPQDTEAINPAFDIVPSDLISGIITEKGILDPL.

Substrate-binding positions include 46 to 48 (RGA), Arg80, and Gln174. Asp215 acts as the Proton donor in catalysis. 224–225 (NK) is a substrate binding site.

The protein belongs to the eIF-2B alpha/beta/delta subunits family. MtnA subfamily.

The enzyme catalyses 5-(methylsulfanyl)-alpha-D-ribose 1-phosphate = 5-(methylsulfanyl)-D-ribulose 1-phosphate. In terms of biological role, catalyzes the interconversion of methylthioribose-1-phosphate (MTR-1-P) into methylthioribulose-1-phosphate (MTRu-1-P). The sequence is that of Putative methylthioribose-1-phosphate isomerase from Methanothermobacter thermautotrophicus (strain ATCC 29096 / DSM 1053 / JCM 10044 / NBRC 100330 / Delta H) (Methanobacterium thermoautotrophicum).